Consider the following 206-residue polypeptide: Glutathione S-transferase 1 (206 aa).

A GST N-terminal domain is found at 2 to 79; it reads PQYKLTYFDI…YLGRQFGLAG (78 aa). Glutathione-binding positions include Y8, W39, K43, 49-51, and 63-64; these read GQL and QS. Positions 81–206 constitute a GST C-terminal domain; that stretch reads TPMEEAQVDS…WIAERPKTPY (126 aa).

The protein belongs to the GST superfamily. Sigma family.

The catalysed reaction is RX + glutathione = an S-substituted glutathione + a halide anion + H(+). Conjugation of reduced glutathione to a wide number of exogenous and endogenous hydrophobic electrophiles. Can also function as a GSH peroxidase. The protein is Glutathione S-transferase 1 (GST1) of Ascaris suum (Pig roundworm).